The chain runs to 37 residues: MKLRASVRKICSKCRLIRRGKRLYVFCVNARHKQKQG.

This sequence belongs to the bacterial ribosomal protein bL36 family.

It localises to the plastid. Its subcellular location is the chloroplast. The polypeptide is Large ribosomal subunit protein bL36c (Welwitschia mirabilis (Tree tumbo)).